A 572-amino-acid polypeptide reads, in one-letter code: Ribonuclease Y (572 aa).

A helical membrane pass occupies residues 1 to 21; that stretch reads MPTLYVILSLLLGLIGGVLVQ. Disordered regions lie at residues 59–85 and 110–142; these read HEAA…DAAE and QLEA…ERED. Composition is skewed to basic and acidic residues over residues 110-119 and 129-142; these read QLEAEREQAK and LSTD…ERED. The KH domain occupies 262–322; it reads SVSVVPIPSD…LRREVARHVL (61 aa). The region spanning 388 to 481 is the HD domain; that stretch reads VLKHSVQVAH…VAAADAISAA (94 aa).

The protein belongs to the RNase Y family.

It localises to the cell membrane. Its function is as follows. Endoribonuclease that initiates mRNA decay. In Deinococcus radiodurans (strain ATCC 13939 / DSM 20539 / JCM 16871 / CCUG 27074 / LMG 4051 / NBRC 15346 / NCIMB 9279 / VKM B-1422 / R1), this protein is Ribonuclease Y.